A 292-amino-acid polypeptide reads, in one-letter code: GID complex substrate-recognition subunit 10 (292 aa).

It belongs to the GID4/VID24 family. Substrate-recognition component of the GID/CTLH ubiquitin ligase complex. In the absence of stress, the complex exists as an inactive anticipatory complex (GID(Ant)), composed of VID30/GID1, the E3 ubiquitin-ligase RMD5/GID2, VID28/GID5, GID8, and the RING-like subunit FYV10/GID9, awaiting a substrate receptor to form the active E3 ligase complex. When cells are shifted to glucose-containing medium, the substrate receptor VID24/GID4 is induced and becomes part of the complex, named GID(SR4). Under osmotic or heat stress, the substrate receptor GID10 is induced and becomes part of the complex, named GID(SR10). Interacts with proteins that have an N-terminal Pro/N-degron, including ART2.

Functionally, substrate-recognition component of the GID E3 ligase complex recruiting N termini and catalyzing ubiquitination of proteins targeted for degradation. GID E3 is regulated through assembly with interchangeable N-degron-binding substrate receptors induced by distinct environmental perturbations. Required for the adaptation to osmotic or heat stress. Required for the regulation of protein levels of the adapter protein ART2, a component of the ART-Rsp5 ubiquitin ligase pathway, part of the plasma membrane quality control. Specific for substrates with an N-terminal Pro (Pro/N-degron), including ART2. Has high affinity for the N-terminal sequence Pro-Tyr-Ile-Thr, and also recognizes nonproline residues such as Met-Tyr-Ile-Thr-Val or Val-Cys-Phe-His. The chain is GID complex substrate-recognition subunit 10 from Saccharomyces cerevisiae (strain ATCC 204508 / S288c) (Baker's yeast).